The primary structure comprises 411 residues: Zinc metalloproteinase/disintegrin (411 aa).

The first 20 residues, 1-20, serve as a signal peptide directing secretion; the sequence is MIEVLLVTICLAVFPYQGSS. Positions 21 to 190 are excised as a propeptide; sequence IILESGNVND…KASQLYLTPE (170 aa). Positions 197–395 constitute a Peptidase M12B domain; it reads RYVKLAIVVD…SKPQCILNAP (199 aa). Residue aspartate 284 coordinates Ca(2+). 3 disulfide bridges follow: cysteine 308/cysteine 390, cysteine 352/cysteine 374, and cysteine 354/cysteine 357. Histidine 333 is a Zn(2+) binding site. Residue glutamate 334 is part of the active site. Residues histidine 337 and histidine 343 each coordinate Zn(2+). Cysteine 390 and asparagine 393 together coordinate Ca(2+). A propeptide spanning residues 396–411 is cleaved from the precursor; the sequence is LRTDTVSTPVSGNEPL.

It belongs to the venom metalloproteinase (M12B) family. P-II subfamily. Monomer. It depends on Zn(2+) as a cofactor. As to expression, expressed by the venom gland.

The protein localises to the secreted. Functionally, snake venom metalloproteinase that impairs hemostasis in the envenomed animal. The polypeptide is Zinc metalloproteinase/disintegrin (Protobothrops mucrosquamatus (Taiwan habu)).